The chain runs to 86 residues: Progonadoliberin IIA (86 aa).

The first 24 residues, 1–24 (MVHICRLFVVMGMLLCLSAQFASS), serve as a signal peptide directing secretion. The residue at position 25 (Q25) is a Pyrrolidone carboxylic acid. Position 34 is a glycine amide (G34).

It belongs to the GnRH family. As to expression, olfactory bulbs, hypothalamus and telencephalon, midbrain and posterior brain areas.

The protein localises to the secreted. In terms of biological role, stimulates the secretion of gonadotropins. This is Progonadoliberin IIA (gnrh2a) from Carassius auratus (Goldfish).